Reading from the N-terminus, the 165-residue chain is 6,7-dimethyl-8-ribityllumazine synthase (165 aa).

5-amino-6-(D-ribitylamino)uracil-binding positions include Y30, 61-63 (ALE), and 90-92 (VVI). Position 95–96 (95–96 (ET)) interacts with (2S)-2-hydroxy-3-oxobutyl phosphate. Residue H98 is the Proton donor of the active site. Residue N123 participates in 5-amino-6-(D-ribitylamino)uracil binding. R137 lines the (2S)-2-hydroxy-3-oxobutyl phosphate pocket.

This sequence belongs to the DMRL synthase family.

The enzyme catalyses (2S)-2-hydroxy-3-oxobutyl phosphate + 5-amino-6-(D-ribitylamino)uracil = 6,7-dimethyl-8-(1-D-ribityl)lumazine + phosphate + 2 H2O + H(+). It functions in the pathway cofactor biosynthesis; riboflavin biosynthesis; riboflavin from 2-hydroxy-3-oxobutyl phosphate and 5-amino-6-(D-ribitylamino)uracil: step 1/2. Catalyzes the formation of 6,7-dimethyl-8-ribityllumazine by condensation of 5-amino-6-(D-ribitylamino)uracil with 3,4-dihydroxy-2-butanone 4-phosphate. This is the penultimate step in the biosynthesis of riboflavin. The protein is 6,7-dimethyl-8-ribityllumazine synthase of Xanthobacter autotrophicus (strain ATCC BAA-1158 / Py2).